Reading from the N-terminus, the 955-residue chain is Leucine--tRNA ligase (955 aa).

A 'HIGH' region motif is present at residues 66–77; it reads PYPSGSGLHVGH. The short motif at 725–729 is the 'KMSKS' region element; the sequence is KMGKS. Lysine 728 contacts ATP.

The protein belongs to the class-I aminoacyl-tRNA synthetase family.

It localises to the cytoplasm. The catalysed reaction is tRNA(Leu) + L-leucine + ATP = L-leucyl-tRNA(Leu) + AMP + diphosphate. In Saccharopolyspora erythraea (strain ATCC 11635 / DSM 40517 / JCM 4748 / NBRC 13426 / NCIMB 8594 / NRRL 2338), this protein is Leucine--tRNA ligase.